The primary structure comprises 533 residues: Calcium/calmodulin-dependent protein kinase type II subunit delta (533 aa).

Alanine 2 carries the N-acetylalanine modification. In terms of domain architecture, Protein kinase spans 14 to 272; it reads YQLFEELGKG…ASEALKHPWI (259 aa). ATP is bound by residues 20 to 28 and lysine 43; that span reads LGKGAFSVV. The active-site Proton acceptor is aspartate 136. The autoinhibitory domain stretch occupies residues 283–292; the sequence is HRQETVDCLK. Phosphothreonine; by autocatalysis is present on threonine 287. The segment at 291–301 is calmodulin-binding; that stretch reads LKKFNARRKLK. Residues threonine 306 and threonine 307 each carry the phosphothreonine; by autocatalysis modification. Serine 315 is subject to Phosphoserine. N6-acetyllysine is present on lysine 318. Serine 319 and serine 364 each carry phosphoserine. A disordered region spans residues 337 to 375; it reads TSPKENIPTPALEPQTTVIHNPDGNKESTESSNTTIEDE. The residue at position 365 (threonine 365) is a Phosphothreonine. Serine 367 is subject to Phosphoserine. 2 positions are modified to phosphothreonine: threonine 370 and threonine 371. Serine 438, serine 524, and serine 528 each carry phosphoserine.

It belongs to the protein kinase superfamily. CAMK Ser/Thr protein kinase family. CaMK subfamily. CAMK2 is composed of 4 different chains: alpha (CAMK2A), beta (CAMK2B), gamma (CAMK2G), and delta (CAMK2D). The different isoforms assemble into homo- or heteromultimeric holoenzymes composed of 12 subunits with two hexameric rings stacked one on top of the other. Interacts with RRAD and CACNB2. In terms of processing, autophosphorylation of Thr-287 following activation by Ca(2+)/calmodulin. Phosphorylation of Thr-287 locks the kinase into an activated state. In terms of tissue distribution, expressed in liver.

The protein localises to the cell membrane. It localises to the sarcolemma. Its subcellular location is the sarcoplasmic reticulum membrane. The catalysed reaction is L-seryl-[protein] + ATP = O-phospho-L-seryl-[protein] + ADP + H(+). The enzyme catalyses L-threonyl-[protein] + ATP = O-phospho-L-threonyl-[protein] + ADP + H(+). With respect to regulation, activated by Ca(2+)/calmodulin. Binding of calmodulin results in conformational change that relieves intrasteric autoinhibition and allows autophosphorylation of Thr-287 which turns the kinase in a constitutively active form and confers to the kinase a Ca(2+)-independent activity. Its function is as follows. Calcium/calmodulin-dependent protein kinase involved in the regulation of Ca(2+) homeostatis and excitation-contraction coupling (ECC) in heart by targeting ion channels, transporters and accessory proteins involved in Ca(2+) influx into the myocyte, Ca(2+) release from the sarcoplasmic reticulum (SR), SR Ca(2+) uptake and Na(+) and K(+) channel transport. Targets also transcription factors and signaling molecules to regulate heart function. In its activated form, is involved in the pathogenesis of dilated cardiomyopathy and heart failure. Contributes to cardiac decompensation and heart failure by regulating SR Ca(2+) release via direct phosphorylation of RYR2 Ca(2+) channel on 'Ser-2808'. In the nucleus, phosphorylates the MEF2 repressor HDAC4, promoting its nuclear export and binding to 14-3-3 protein, and expression of MEF2 and genes involved in the hypertrophic program. Is essential for left ventricular remodeling responses to myocardial infarction. In pathological myocardial remodeling acts downstream of the beta adrenergic receptor signaling cascade to regulate key proteins involved in ECC. Regulates Ca(2+) influx to myocytes by binding and phosphorylating the L-type Ca(2+) channel subunit beta-2 CACNB2. In addition to Ca(2+) channels, can target and regulate the cardiac sarcolemmal Na(+) channel Nav1.5/SCN5A and the K+ channel Kv4.3/KCND3, which contribute to arrhythmogenesis in heart failure. Phosphorylates phospholamban (PLN/PLB), an endogenous inhibitor of SERCA2A/ATP2A2, contributing to the enhancement of SR Ca(2+) uptake that may be important in frequency-dependent acceleration of relaxation (FDAR) and maintenance of contractile function during acidosis. May participate in the modulation of skeletal muscle function in response to exercise, by regulating SR Ca(2+) transport through phosphorylation of PLN/PLB and triadin, a ryanodine receptor-coupling factor. In response to interferon-gamma (IFN-gamma) stimulation, catalyzes phosphorylation of STAT1, stimulating the JAK-STAT signaling pathway. This chain is Calcium/calmodulin-dependent protein kinase type II subunit delta (CAMK2D), found in Oryctolagus cuniculus (Rabbit).